Reading from the N-terminus, the 183-residue chain is ATP synthase subunit b, chloroplastic (183 aa).

A helical transmembrane segment spans residues 27 to 49 (LATNLINLTVVVGVLIYFGKGVL).

Belongs to the ATPase B chain family. As to quaternary structure, F-type ATPases have 2 components, F(1) - the catalytic core - and F(0) - the membrane proton channel. F(1) has five subunits: alpha(3), beta(3), gamma(1), delta(1), epsilon(1). F(0) has four main subunits: a(1), b(1), b'(1) and c(10-14). The alpha and beta chains form an alternating ring which encloses part of the gamma chain. F(1) is attached to F(0) by a central stalk formed by the gamma and epsilon chains, while a peripheral stalk is formed by the delta, b and b' chains.

It is found in the plastid. Its subcellular location is the chloroplast thylakoid membrane. In terms of biological role, f(1)F(0) ATP synthase produces ATP from ADP in the presence of a proton or sodium gradient. F-type ATPases consist of two structural domains, F(1) containing the extramembraneous catalytic core and F(0) containing the membrane proton channel, linked together by a central stalk and a peripheral stalk. During catalysis, ATP synthesis in the catalytic domain of F(1) is coupled via a rotary mechanism of the central stalk subunits to proton translocation. Its function is as follows. Component of the F(0) channel, it forms part of the peripheral stalk, linking F(1) to F(0). The protein is ATP synthase subunit b, chloroplastic of Oryza nivara (Indian wild rice).